The chain runs to 219 residues: Redox-sensing transcriptional repressor Rex (219 aa).

A DNA-binding region (H-T-H motif) is located at residues 17 to 56 (RYLRYVEDLLNHDIMRISSSELSQRMGYTASQVRQDFNNF). 91–96 (GVGNLG) is an NAD(+) binding site.

This sequence belongs to the transcriptional regulatory Rex family. Homodimer.

Its subcellular location is the cytoplasm. Its function is as follows. Modulates transcription in response to changes in cellular NADH/NAD(+) redox state. In Caldicellulosiruptor saccharolyticus (strain ATCC 43494 / DSM 8903 / Tp8T 6331), this protein is Redox-sensing transcriptional repressor Rex.